The primary structure comprises 824 residues: Fibroblast growth factor receptor 2 (824 aa).

The N-terminal stretch at 1 to 21 is a signal peptide; it reads MFSWSYLMGLVMVATATLSLA. Over 22–374 the chain is Extracellular; sequence RPSYNIAEDT…LDSSSSEYTE (353 aa). The region spanning 25–125 is the Ig-like C2-type 1 domain; that stretch reads YNIAEDTTLE…ETRYFIVNIT (101 aa). Residues Cys-62 and Cys-107 are joined by a disulfide bond. 3 N-linked (GlcNAc...) asparagine glycosylation sites follow: Asn-83, Asn-123, and Asn-128. The disordered stretch occupies residues 125–152; the sequence is TDGNSSGDDEDDNDGSEDFTNDNNHKRA. Residues 131-144 show a composition bias toward acidic residues; the sequence is GDDEDDNDGSEDFT. Ig-like C2-type domains follow at residues 153 to 246 and 254 to 356; these read PYWT…YHLD and PPIL…AWLT. The heparin-binding stretch occupies residues 160-177; the sequence is KLEKKLHAVPAANTVKFR. An intrachain disulfide couples Cys-178 to Cys-230. Asn-227, Asn-240, Asn-264, Asn-295, Asn-316, and Asn-329 each carry an N-linked (GlcNAc...) asparagine glycan. Residues Cys-277 and Cys-340 are joined by a disulfide bond. A helical transmembrane segment spans residues 375–395; that stretch reads IAIYCVGGFLIACMIGTIMMC. The Cytoplasmic segment spans residues 396–824; sequence HMKGRGKKSD…PLKHEATQPA (429 aa). Tyr-463 carries the phosphotyrosine; by autocatalysis modification. The 290-residue stretch at 478–767 folds into the Protein kinase domain; the sequence is LTLGKPLGEG…LTQTTNEEYL (290 aa). ATP is bound by residues 484–492, Lys-514, 562–564, and Asn-568; these read LGEGCFGQV and EYA. Tyr-583 is modified (phosphotyrosine; by autocatalysis). Asp-623 serves as the catalytic Proton acceptor. A phosphotyrosine; by autocatalysis mark is found at Tyr-653, Tyr-654, and Tyr-766. Residues 801–824 are disordered; that stretch reads SMNLAFPNPNTQMAPLKHEATQPA.

Belongs to the protein kinase superfamily. Tyr protein kinase family. Fibroblast growth factor receptor subfamily. Monomer. Homodimer after ligand binding. In terms of processing, autophosphorylated. Binding of FGF family members together with heparan sulfate proteoglycan or heparin promotes receptor dimerization and autophosphorylation on tyrosine residues. Autophosphorylation occurs in trans between the two FGFR molecules present in the dimer. Post-translationally, N-glycosylated in the endoplasmic reticulum. The N-glycan chains undergo further maturation to an Endo H-resistant form in the Golgi apparatus. Ubiquitinated. FGFR2 is rapidly ubiquitinated after autophosphorylation, leading to internalization and degradation. Subject to degradation both in lysosomes and by the proteasome.

It is found in the cell membrane. Its subcellular location is the golgi apparatus. It localises to the cytoplasmic vesicle. The catalysed reaction is L-tyrosyl-[protein] + ATP = O-phospho-L-tyrosyl-[protein] + ADP + H(+). Its activity is regulated as follows. Present in an inactive conformation in the absence of bound ligand. Ligand binding leads to dimerization and activation by autophosphorylation on tyrosine residues. In terms of biological role, tyrosine-protein kinase that acts as a cell-surface receptor for fibroblast growth factors and plays an essential role in the regulation of cell proliferation, differentiation, migration and apoptosis, and in the regulation of embryonic development. Required for normal embryonic patterning, limb bud development, lung morphogenesis, osteogenesis and skin development. Plays an essential role in the regulation of osteoblast differentiation, proliferation and apoptosis, and is required for normal skeleton development. Promotes cell proliferation in keratinocytes and immature osteoblasts, but promotes apoptosis in differentiated osteoblasts. Phosphorylates PLCG1, FRS2 and PAK4. Ligand binding leads to the activation of several signaling cascades. Activation of PLCG1 leads to the production of the cellular signaling molecules diacylglycerol and inositol 1,4,5-trisphosphate. Phosphorylation of FRS2 triggers recruitment of GRB2, GAB1, PIK3R1 and SOS1, and mediates activation of RAS, MAPK1/ERK2, MAPK3/ERK1 and the MAP kinase signaling pathway, as well as of the AKT1 signaling pathway. FGFR2 signaling is down-regulated by ubiquitination, internalization and degradation. Mutations that lead to constitutive kinase activation or impair normal FGFR2 maturation, internalization and degradation lead to aberrant signaling. Over-expressed FGFR2 promotes activation of STAT1. In Pleurodeles waltl (Iberian ribbed newt), this protein is Fibroblast growth factor receptor 2 (FGFR2).